The primary structure comprises 313 residues: Olfactory receptor 10Z1 (313 aa).

Over 1 to 25 (MGQTNVTSWRDFVFLGFSSSGELQL) the chain is Extracellular. Residue Asn5 is glycosylated (N-linked (GlcNAc...) asparagine). A helical transmembrane segment spans residues 26 to 46 (LLFALFLSLYLVTLTSNVFII). Over 47–54 (IAIRLDSH) the chain is Cytoplasmic. The helical transmembrane segment at 55–75 (LHTPMYLFLSFLSFSETCYTL) threads the bilayer. The Extracellular segment spans residues 76–99 (GIIPRMLSGLAGGDQAISYVGCAA). An intrachain disulfide couples Cys97 to Cys189. The chain crosses the membrane as a helical span at residues 100–120 (QMFFSASWACTNCFLLAAMGF). The Cytoplasmic portion of the chain corresponds to 121–139 (DRYVAICAPLHYASHMNPT). The chain crosses the membrane as a helical span at residues 140–160 (LCAQLVITSFLTGYLFGLGMT). Topologically, residues 161-197 (LVIFHLSFCSSHEIQHFFCDTPPVLSLACGDTGPSEL) are extracellular. The chain crosses the membrane as a helical span at residues 198 to 217 (RIFILSLLVLLVSFFFITIS). Over 218–237 (YAYILAAILRIPSAEGQKKA) the chain is Cytoplasmic. Residues 238-258 (FSTCASHLTVVIIHYGCASFV) traverse the membrane as a helical segment. At 259-271 (YLRPKASYSLERD) the chain is on the extracellular side. Residues 272–292 (QLIAMTYTVVTPLLNPIVYSL) form a helical membrane-spanning segment. Residues 293–313 (RNRAIQTALRNAFRGRLLGKG) lie on the Cytoplasmic side of the membrane.

This sequence belongs to the G-protein coupled receptor 1 family.

It is found in the cell membrane. In terms of biological role, odorant receptor. The chain is Olfactory receptor 10Z1 (OR10Z1) from Homo sapiens (Human).